Here is a 264-residue protein sequence, read N- to C-terminus: Probable glycerophosphodiester phosphodiesterase 2 (264 aa).

Positions 17–255 constitute a GP-PDE domain; it reads RIAMAHRGFT…DRADLLRDVL (239 aa). His22 functions as the Proton acceptor in the catalytic mechanism. Residues Glu50, Asp52, and His65 each coordinate a divalent metal cation. His65 functions as the Proton donor in the catalytic mechanism.

The protein belongs to the glycerophosphoryl diester phosphodiesterase family. A divalent metal cation serves as cofactor.

The catalysed reaction is a sn-glycero-3-phosphodiester + H2O = an alcohol + sn-glycerol 3-phosphate + H(+). Glycerophosphodiester phosphodiesterase hydrolyzes glycerophosphodiesters into glycerol-3-phosphate (G3P) and the corresponding alcohol. In Mycobacterium tuberculosis (strain ATCC 25618 / H37Rv), this protein is Probable glycerophosphodiester phosphodiesterase 2.